A 546-amino-acid polypeptide reads, in one-letter code: Chaperonin GroEL (546 aa).

Residues threonine 29–proline 32, lysine 50, aspartate 86–threonine 90, glycine 414, and aspartate 494 contribute to the ATP site. Residues lysine 525–methionine 546 are disordered. Residues aspartate 537–methionine 546 are compositionally biased toward gly residues.

This sequence belongs to the chaperonin (HSP60) family. As to quaternary structure, forms a cylinder of 14 subunits composed of two heptameric rings stacked back-to-back. Interacts with the co-chaperonin GroES.

The protein localises to the cytoplasm. It carries out the reaction ATP + H2O + a folded polypeptide = ADP + phosphate + an unfolded polypeptide.. Its function is as follows. Together with its co-chaperonin GroES, plays an essential role in assisting protein folding. The GroEL-GroES system forms a nano-cage that allows encapsulation of the non-native substrate proteins and provides a physical environment optimized to promote and accelerate protein folding. The chain is Chaperonin GroEL from Bdellovibrio bacteriovorus (strain ATCC 15356 / DSM 50701 / NCIMB 9529 / HD100).